The primary structure comprises 252 residues: Pantothenate synthetase (252 aa).

Met-29–His-36 is a binding site for ATP. The Proton donor role is filled by His-36. Gln-60 is a binding site for (R)-pantoate. A beta-alanine-binding site is contributed by Gln-60. Position 146-149 (Gly-146–Asp-149) interacts with ATP. Position 152 (Gln-152) interacts with (R)-pantoate. Residues Val-175 and Cys-183–Arg-186 each bind ATP.

This sequence belongs to the pantothenate synthetase family. Homodimer.

Its subcellular location is the cytoplasm. The enzyme catalyses (R)-pantoate + beta-alanine + ATP = (R)-pantothenate + AMP + diphosphate + H(+). It functions in the pathway cofactor biosynthesis; (R)-pantothenate biosynthesis; (R)-pantothenate from (R)-pantoate and beta-alanine: step 1/1. Catalyzes the condensation of pantoate with beta-alanine in an ATP-dependent reaction via a pantoyl-adenylate intermediate. In Legionella pneumophila (strain Lens), this protein is Pantothenate synthetase.